A 319-amino-acid polypeptide reads, in one-letter code: Annexin A4 (319 aa).

A2 carries the post-translational modification N-acetylalanine. T7 carries the post-translational modification Phosphothreonine; by PKC. S12 bears the Phosphoserine mark. 4 Annexin repeats span residues 14–85 (FNAA…GMMT), 86–157 (PTVL…SLSA), 169–241 (ALVR…AIVK), and 245–316 (NKSA…ILCG). K213, K293, and K300 each carry N6-acetyllysine.

It belongs to the annexin family. Monomer.

It localises to the zymogen granule membrane. In terms of biological role, calcium/phospholipid-binding protein which promotes membrane fusion and is involved in exocytosis. The protein is Annexin A4 (ANXA4) of Sus scrofa (Pig).